Reading from the N-terminus, the 418-residue chain is STE20-related kinase adapter protein beta (418 aa).

In terms of domain architecture, Protein kinase spans Tyr58 to Phe369. Residues Ile64–Thr72 and Lys89 contribute to the ATP site.

Belongs to the protein kinase superfamily. STE Ser/Thr protein kinase family. STE20 subfamily. In terms of assembly, component of a trimeric complex composed of STK11/LKB1, STRAD (STRADA or STRADB) and CAB39/MO25 (CAB39/MO25alpha or CAB39L/MO25beta): the complex tethers STK11/LKB1 in the cytoplasm and stimulates its catalytic activity. Interacts with BIRC4/XIAP. These two proteins are likely to coexist in a complex with TAK1, TRAF6, TAB1 and TAB2.

The protein localises to the nucleus. It localises to the cytoplasm. In terms of biological role, pseudokinase which, in complex with CAB39/MO25 (CAB39/MO25alpha or CAB39L/MO25beta), binds to and activates STK11/LKB1. Adopts a closed conformation typical of active protein kinases and binds STK11/LKB1 as a pseudosubstrate, promoting conformational change of STK11/LKB1 in an active conformation. The polypeptide is STE20-related kinase adapter protein beta (Stradb) (Mus musculus (Mouse)).